The chain runs to 230 residues: Thymidylate kinase (230 aa).

Gly-23–Thr-30 is an ATP binding site.

The protein belongs to the thymidylate kinase family.

The catalysed reaction is dTMP + ATP = dTDP + ADP. Its function is as follows. Phosphorylation of dTMP to form dTDP in both de novo and salvage pathways of dTTP synthesis. The chain is Thymidylate kinase from Ureaplasma parvum serovar 3 (strain ATCC 27815 / 27 / NCTC 11736).